Reading from the N-terminus, the 422-residue chain is Serine protease HTRA2, mitochondrial (422 aa).

Residues 1–17 constitute a mitochondrion transit peptide; sequence MALRGCHRLEVIFKRCI. Positions 18-74 are excised as a propeptide; the sequence is ASPVLHSQAGNRRSSQLAIKGVDPNSNGNSGQYQQNGEHKEKGWRRLVRFFVPFSLG. The segment at 33 to 55 is disordered; sequence QLAIKGVDPNSNGNSGQYQQNGE. The segment covering 42–53 has biased composition (low complexity); it reads NSNGNSGQYQQN. Residues 64 to 82 form a helical membrane-spanning segment; sequence LVRFFVPFSLGAAVSAAII. 2 consecutive short sequence motifs (IAP-binding) follow at residues 75–78 and 94–97; these read AAVS and SKMT. The tract at residues 139 to 302 is serine protease; it reads SNGSGFIIEQ…IPIDYVKVFL (164 aa). Residues His157, Asp189, and Ser266 each act as charge relay system in the active site. The 86-residue stretch at 325–410 folds into the PDZ domain; the sequence is MGITMLTLTP…TLDIVILRGV (86 aa).

The protein belongs to the peptidase S1C family. Interacts with th/DIAP1 (via BIR 2 domain).

Its subcellular location is the mitochondrion intermembrane space. The protein localises to the mitochondrion membrane. The catalysed reaction is Cleavage of non-polar aliphatic amino-acids at the P1 position, with a preference for Val, Ile and Met. At the P2 and P3 positions, Arg is selected most strongly with a secondary preference for other hydrophilic residues.. Its function is as follows. Serine protease that shows proteolytic activity against a non-specific substrate beta-casein. Promotes or induces cell death either by direct binding to and inhibition of BIRC proteins (also called inhibitor of apoptosis proteins, IAPs), leading to an increase in caspase activity, or by a BIRC inhibition-independent, caspase-independent and serine protease activity-dependent mechanism. Can antagonize antiapoptotic activity of th/Diap1 by directly inducing the degradation of th/Diap1. This chain is Serine protease HTRA2, mitochondrial, found in Drosophila simulans (Fruit fly).